A 130-amino-acid polypeptide reads, in one-letter code: Small ribosomal subunit protein uS9 (130 aa).

This sequence belongs to the universal ribosomal protein uS9 family.

In Anoxybacillus flavithermus (strain DSM 21510 / WK1), this protein is Small ribosomal subunit protein uS9.